Consider the following 493-residue polypeptide: Cobyric acid synthase (493 aa).

In terms of domain architecture, GATase cobBQ-type spans 260–427 (RLSVAAIRLP…RHGYLQDDPA (168 aa)). Histidine 419 is a catalytic residue.

This sequence belongs to the CobB/CobQ family. CobQ subfamily.

It functions in the pathway cofactor biosynthesis; adenosylcobalamin biosynthesis. Its function is as follows. Catalyzes amidations at positions B, D, E, and G on adenosylcobyrinic A,C-diamide. NH(2) groups are provided by glutamine, and one molecule of ATP is hydrogenolyzed for each amidation. The polypeptide is Cobyric acid synthase (Corynebacterium efficiens (strain DSM 44549 / YS-314 / AJ 12310 / JCM 11189 / NBRC 100395)).